Here is a 72-residue protein sequence, read N- to C-terminus: Lantibiotic Flvbeta.g (72 aa).

A propeptide spans 1–34 (MNNNNFDMEKFKKLAAIVSEGEIDEMLDETTVGA) (cleaved by FlvT). Positions 36–40 (STLPC) form a cross-link, lanthionine (Ser-Cys); by FlvM2. 3 positions are modified to 2,3-didehydrobutyrine; by FlvM2: Thr-37, Thr-46, and Thr-48. 3 consecutive cross-links (beta-methyllanthionine (Thr-Cys); by FlvM2) follow at residues 55–61 (TTGFDWC), 63–66 (TGAC), and 67–70 (THSC).

Contains LL-lanthionine and DL-beta-methyllanthionine, when coepressed in E.coli with the flavecin synthetase FlvM2.

The protein resides in the secreted. Functionally, lanthionine-containing peptide antibiotic (lantibiotic) that is probably weakly active on Gram-positive bacteria, since its analog [Del1]Flvbeta.g shows weak antibacterial activity against M.luteus. This activity is synergistically enhanced by [Del2]Flvalpha.a, an analog of Flvalpha.a, which is encoded by the same operon than Flvbeta.g. The bactericidal activity of lantibiotics is based on depolarization of energized bacterial cytoplasmic membranes, initiated by the formation of aqueous transmembrane pores. The polypeptide is Lantibiotic Flvbeta.g (Ruminococcus flavefaciens).